A 565-amino-acid chain; its full sequence is Liver carboxylesterase 1 (565 aa).

The first 18 residues, 1–18 (MWLCALALASLAACTAWG), serve as a signal peptide directing secretion. Asn-79 is a glycosylation site (N-linked (GlcNAc...) asparagine). Residues Cys-87 and Cys-116 are joined by a disulfide bond. Ser-221 functions as the Acyl-ester intermediate in the catalytic mechanism. A disulfide bridge links Cys-273 with Cys-284. Residue Glu-353 is the Charge relay system of the active site. Residue Asn-389 is glycosylated (N-linked (GlcNAc...) asparagine). His-467 (charge relay system) is an active-site residue. Position 565 (Leu-565) is a short sequence motif, prevents secretion from ER.

This sequence belongs to the type-B carboxylesterase/lipase family. Monomer.

Its subcellular location is the endoplasmic reticulum lumen. The enzyme catalyses a carboxylic ester + H2O = an alcohol + a carboxylate + H(+). Its function is as follows. Involved in the detoxification of xenobiotics and in the activation of ester and amide prodrugs. This Oryctolagus cuniculus (Rabbit) protein is Liver carboxylesterase 1.